We begin with the raw amino-acid sequence, 478 residues long: Protein nucleotidyltransferase YdiU (478 aa).

The ATP site is built by Gly84, Gly86, Arg87, Lys107, Asp119, Gly120, Arg170, and Arg177. Asp246 acts as the Proton acceptor in catalysis. Asn247 and Asp256 together coordinate Mg(2+). Asp256 serves as a coordination point for ATP.

This sequence belongs to the SELO family. The cofactor is Mg(2+). Requires Mn(2+) as cofactor.

It catalyses the reaction L-seryl-[protein] + ATP = 3-O-(5'-adenylyl)-L-seryl-[protein] + diphosphate. The catalysed reaction is L-threonyl-[protein] + ATP = 3-O-(5'-adenylyl)-L-threonyl-[protein] + diphosphate. The enzyme catalyses L-tyrosyl-[protein] + ATP = O-(5'-adenylyl)-L-tyrosyl-[protein] + diphosphate. It carries out the reaction L-histidyl-[protein] + UTP = N(tele)-(5'-uridylyl)-L-histidyl-[protein] + diphosphate. It catalyses the reaction L-seryl-[protein] + UTP = O-(5'-uridylyl)-L-seryl-[protein] + diphosphate. The catalysed reaction is L-tyrosyl-[protein] + UTP = O-(5'-uridylyl)-L-tyrosyl-[protein] + diphosphate. Functionally, nucleotidyltransferase involved in the post-translational modification of proteins. It can catalyze the addition of adenosine monophosphate (AMP) or uridine monophosphate (UMP) to a protein, resulting in modifications known as AMPylation and UMPylation. The polypeptide is Protein nucleotidyltransferase YdiU (Escherichia coli O1:K1 / APEC).